A 410-amino-acid chain; its full sequence is 45 kDa immediate-early protein 2 (410 aa).

The interval 36–166 (SEEEQGEEVE…SKRISELDNE (131 aa)) is disordered. 3 stretches are compositionally biased toward low complexity: residues 47 to 67 (RGAT…TSPT), 90 to 101 (SSSSSSCSSASD), and 132 to 147 (AASS…SSGG). The segment at 257 to 283 (VRCRLGTMCNLALSTPFLMEHTMPVTH) is a zinc-finger region.

Its function is as follows. Activates the E1.7 promoter. This activation is augmented by the IE1 protein. It down-regulates the transcription of genes under the control of the major IE promoter. The polypeptide is 45 kDa immediate-early protein 2 (UL122) (Homo sapiens (Human)).